The sequence spans 168 residues: MLTVSRLIPRGQGLAPVLRQRASTVELDWELRQKSRLSATDSAGRALGIFLPRGTRLRGGDMLVAEDGSLVRVLATPQPVLLISACPKHGSPFDLTRAAYHLGNRHVPIELQPDHLKIEPDPVLADMLRALHLIVQADNLPFEPEGGAYAAGQGGGHGPHGQHTHPHH.

Residues glutamate 145 to histidine 168 are disordered.

The protein belongs to the UreE family.

The protein resides in the cytoplasm. Its function is as follows. Involved in urease metallocenter assembly. Binds nickel. Probably functions as a nickel donor during metallocenter assembly. The protein is Urease accessory protein UreE of Verminephrobacter eiseniae (strain EF01-2).